A 505-amino-acid chain; its full sequence is Serine carboxypeptidase-like 47 (505 aa).

An N-terminal signal peptide occupies residues 1 to 22; the sequence is MEAKTFFLFMLFIFSQSWLSTS. N-linked (GlcNAc...) asparagine glycosylation is found at Asn37, Asn86, and Asn122. 3 disulfide bridges follow: Cys138–Cys378, Cys306–Cys321, and Cys344–Cys349. The active site involves Ser228. The N-linked (GlcNAc...) asparagine glycan is linked to Asn301. The active site involves Asp416. N-linked (GlcNAc...) asparagine glycans are attached at residues Asn432 and Asn444. The active site involves His473.

This sequence belongs to the peptidase S10 family. As to expression, expressed in roots, flowers and siliques.

Its subcellular location is the secreted. Functionally, probable carboxypeptidase. This chain is Serine carboxypeptidase-like 47 (SCPL47), found in Arabidopsis thaliana (Mouse-ear cress).